Here is a 286-residue protein sequence, read N- to C-terminus: MKSNGHPSNNSINEPIKQQETKQNNKSSHKTPHKPPYLARAKFQPKTSSFSNSSFQSSTPPKPQIALKSPSPSPSQPKTSSSSYSSLSSPSPSQPKTSSPSLPSSTPPKPRQIALKSPSSSSSSQPKTSSSSYSSLPSSTPPKPQHIELKSPSTVKKSPIVKKTNSPKGSKFKKTIRSSRSTRAGLTISVSRVEKLLRGRRYSKRVSPTSCVFLAAVLEYMVLELLELSLNELSLSKKSRRIKNRHINLSILKDVELSALLNDVIICSGGVLSSIHPSLLKLKKDQ.

The segment covering 1 to 26 has biased composition (polar residues); that stretch reads MKSNGHPSNNSINEPIKQQETKQNNK. Positions 1-180 are disordered; that stretch reads MKSNGHPSNN…KFKKTIRSSR (180 aa). Composition is skewed to low complexity over residues 44-59, 76-104, and 115-138; these read QPKT…QSST, QPKT…SLPS, and LKSP…SLPS.

Belongs to the histone H2A family.

This is Histone H2A.v2 (H2Av2) from Dictyostelium discoideum (Social amoeba).